Consider the following 311-residue polypeptide: MFKFILKRIALMFPLVIVVSFMTFLLTYITNENPAVTILHAQGTPNVTPELIAETNEKYGFNDPLLIQYKNWLLEAMQFNFGTSYITGDPVAERIGPAFMNTLKLTIISSVMVMITSIILGVVSALKRGKFTDRAIRSVAFFLTALPSYWIASILIIYVSVKLNILPTSGLTGPESYILPVIVITIAYAGIYFRNVRRSMVEQLNEDYVLYLRASGVKSITLMLHVLRNAIQVAVSIFCMSIPMIMGGLVVIEYIFAWPGLGQLSLKAILEHDFPVIQAYVLIVAVLFIVFNTLADIINALLNPRLREGAR.

6 helical membrane passes run 9–29 (IALM…LTYI), 105–125 (LTII…VVSA), 139–159 (VAFF…IIYV), 173–193 (GPES…GIYF), 237–257 (IFCM…YIFA), and 274–294 (FPVI…FNTL). One can recognise an ABC transmembrane type-1 domain in the interval 99-295 (FMNTLKLTII…VLFIVFNTLA (197 aa)).

It belongs to the binding-protein-dependent transport system permease family. In terms of assembly, the complex is composed of two ATP-binding proteins (CntD and CntF), two transmembrane proteins (CntB and CntC) and a solute-binding protein (CntA).

It localises to the cell membrane. In terms of biological role, part of the ABC transporter complex CntABCDF (Opp1) involved in the uptake of metal in complex with the metallophore staphylopine (StP). May be involved in the import of a large array of divalent metals ions such as nickel, cobalt, zinc, copper and iron. Probably responsible for the translocation of the substrate across the membrane. The polypeptide is Metal-staphylopine import system permease protein CntB (Staphylococcus aureus (strain Mu50 / ATCC 700699)).